The following is a 691-amino-acid chain: Homeobox protein NOBOX (691 aa).

Residues 94–103 (ELTRGQKAGE) are compositionally biased toward basic and acidic residues. Residues 94 to 233 (ELTRGQKAGE…NSARATHNPV (140 aa)) are disordered. Positions 216-228 (PTSSPGAPNSARA) are enriched in polar residues. A DNA-binding region (homeobox) is located at residues 272 to 363 (RKKTRTLYRS…NRRAKWRKME (92 aa)). Disordered regions lie at residues 366 to 385 (NGKE…SQCS), 394 to 437 (VPME…AQRV), and 635 to 691 (QALG…SHVP). Pro residues predominate over residues 395 to 405 (PMEPKPDPFPQ). Over residues 420-432 (TSDQTLAPTQPSE) the composition is skewed to polar residues. The segment covering 679-691 (EEARGDDKNSHVP) has biased composition (basic and acidic residues).

Expressed in ovaries, testes and pancreas. Expressed within all stages of the adult female germline, from primordial follicles through to MII oocytes.

It localises to the nucleus. Its function is as follows. Transcription factor which may play a role in oogenesis. Binds preferentially to the DNA sequences 5'-TAATTG-3', 5'-TAGTTG-3' and 5'-TAATTA-3'. In Homo sapiens (Human), this protein is Homeobox protein NOBOX (NOBOX).